A 482-amino-acid polypeptide reads, in one-letter code: Malvidin galactosylase UGT88C3 (482 aa).

The active-site Proton acceptor is the H16. D117 serves as the catalytic Charge relay. UDP contacts are provided by S279, W345, A349, H366, N370, S371, and E374.

The protein belongs to the UDP-glycosyltransferase family.

The protein localises to the endoplasmic reticulum. It localises to the nucleus. The catalysed reaction is malvidin + UDP-alpha-D-galactose = malvidin 3-O-beta-D-galactoside + UDP + H(+). Its pathway is pigment biosynthesis; anthocyanin biosynthesis. UDP-glycosyltransferase which uses UDP-galactose and malvidin as substrates to catalyze the biosynthesis of malvidin 3-O-galactoside, an anthocyanin conferring purple pigmentation. This is Malvidin galactosylase UGT88C3 from Oryza sativa subsp. indica (Rice).